Here is a 281-residue protein sequence, read N- to C-terminus: MAQKTIRVGSIEIANDKPMVLFGGMNVLESRDMAMQVCEEYVRVTEKLGIPYVFKASFDKANRSSVNSYRGPGLEEGMRIFEEIKRTFNVPLITDVHEPHQAAVVAEVCDIIQLPAFLSRQTDLVVAMAKTGAVINIKKAQFLAPQEMKHILTKCEEAGNDQLILCERGSSFGYNNLVVDMLGFGVMKQFEYPILFDVTHALQMPGGRSDSAGGRRAQVLDLAKAGISQNLAGLFLEAHPDPDNAKCDGPCALRLDKLEPFLAQLKSLDELVKSFPIVETA.

The protein belongs to the KdsA family.

It localises to the cytoplasm. The catalysed reaction is D-arabinose 5-phosphate + phosphoenolpyruvate + H2O = 3-deoxy-alpha-D-manno-2-octulosonate-8-phosphate + phosphate. It functions in the pathway carbohydrate biosynthesis; 3-deoxy-D-manno-octulosonate biosynthesis; 3-deoxy-D-manno-octulosonate from D-ribulose 5-phosphate: step 2/3. It participates in bacterial outer membrane biogenesis; lipopolysaccharide biosynthesis. The chain is 2-dehydro-3-deoxyphosphooctonate aldolase from Pseudomonas savastanoi pv. phaseolicola (strain 1448A / Race 6) (Pseudomonas syringae pv. phaseolicola (strain 1448A / Race 6)).